Reading from the N-terminus, the 890-residue chain is MTDVTIKTLAAERQTSVERLVQQFADAGIRKSADDSVSAQEKQTLIDHLNQKNSGPDKLTLQRKTRSTLNIPGTGGKSKSVQIEVRKKRTFVKRDPQEAERLAAEEQAQREAEEQARREAEESAKREAQQKAEREAAEQAKREAAEQAKREAAEKDKVSNQQDDMTKNAQAEKARREQEAAELKRKAEEEARRKLEEEARRVAEEARRMAEENKWTDNAEPTEDSSDYHVTTSQHARQAEDESDREVEGGRGRGRNAKAARPKKGNKHAESKADREEARAAVRGGKGGKRKGSSLQQGFQKPAQAVNRDVVIGETITVGELANKMAVKGSQVIKAMMKLGAMATINQVIDQETAQLVAEEMGHKVILRRENELEEAVMSDRDTGAAAEPRAPVVTIMGHVDHGKTSLLDYIRSTKVASGEAGGITQHIGAYHVETENGMITFLDTPGHAAFTSMRARGAQATDIVVLVVAADDGVMPQTIEAIQHAKAAGVPVVVAVNKIDKPEADPDRVKNELSQYGILPEEWGGESQFVHVSAKAGTGIDELLDAILLQAEVLELKAVRKGMASGAVIESFLDKGRGPVATVLVREGTLHKGDIVLCGFEYGRVRAMRNELGQEVLEAGPSIPVEILGLSGVPAAGDEVTVVRDEKKAREVALYRQGKFREVKLARQQKSKLENMFANMTEGEVHEVNIVLKADVQGSVEAISDSLLKLSTDEVKVKIIGSGVGGITETDATLAAASNAILVGFNVRADASARKVIEAESLDLRYYSVIYNLIDEVKAAMSGMLSPELKQQIIGLAEVRDVFKSPKFGAIAGCMVTEGVVKRHNPIRVLRDNVVIYEGELESLRRFKDDVNEVRNGMECGIGVKNYNDVRTGDVIEVFEIIEIQRTIA.

The segment at 45-304 (LIDHLNQKNS…LQQGFQKPAQ (260 aa)) is disordered. The span at 67-81 (STLNIPGTGGKSKSV) shows a compositional bias: polar residues. Residues 92-217 (VKRDPQEAER…RMAEENKWTD (126 aa)) are compositionally biased toward basic and acidic residues. Basic residues predominate over residues 252 to 266 (GRGRNAKAARPKKGN). Basic and acidic residues predominate over residues 267–280 (KHAESKADREEARA). The tr-type G domain occupies 389–558 (PRAPVVTIMG…LLQAEVLELK (170 aa)). The segment at 398–405 (GHVDHGKT) is G1. Residue 398 to 405 (GHVDHGKT) coordinates GTP. The tract at residues 423–427 (GITQH) is G2. The tract at residues 444–447 (DTPG) is G3. GTP-binding positions include 444-448 (DTPGH) and 498-501 (NKID). Residues 498 to 501 (NKID) are G4. The interval 534 to 536 (SAK) is G5. Lysine 808 carries the N6-acetyllysine modification.

This sequence belongs to the TRAFAC class translation factor GTPase superfamily. Classic translation factor GTPase family. IF-2 subfamily.

The protein localises to the cytoplasm. Its function is as follows. One of the essential components for the initiation of protein synthesis. Protects formylmethionyl-tRNA from spontaneous hydrolysis and promotes its binding to the 30S ribosomal subunits. Also involved in the hydrolysis of GTP during the formation of the 70S ribosomal complex. The chain is Translation initiation factor IF-2 from Escherichia coli O127:H6 (strain E2348/69 / EPEC).